The chain runs to 273 residues: SPRY domain-containing SOCS box protein 1 (273 aa).

Tyr31 is modified (phosphotyrosine). The B30.2/SPRY domain occupies Lys33 to Asp231. Residues Pro232–Gln273 form the SOCS box domain.

Belongs to the SPSB family. As to quaternary structure, component of the probable ECS(SPSB1) E3 ubiquitin-protein ligase complex which contains CUL5, RNF7/RBX2, Elongin BC complex and SPSB1. Interacts with CUL5, RNF7, ELOB and ELOC. Directly interacts with MET tyrosine kinase domain in the presence and in the absence of HGF, however HGF treatment has a positive effect on this interaction. When phosphorylated, interacts with RASA1 without affecting its stability. Interacts (via B30.2/SPRY domain) with PAWR; this interaction is direct and occurs in association with the Elongin BC complex. Interacts with EPHB2. Interacts with NOS2.

Its subcellular location is the cytoplasm. The protein resides in the cytosol. It functions in the pathway protein modification; protein ubiquitination. Its function is as follows. Substrate recognition component of a SCF-like ECS (Elongin BC-CUL2/5-SOCS-box protein) E3 ubiquitin-protein ligase complex which mediates the ubiquitination and subsequent proteasomal degradation of target proteins. Negatively regulates nitric oxide (NO) production and limits cellular toxicity in activated macrophages by mediating the ubiquitination and proteasomal degradation of NOS2. Acts as a bridge which links the NOS2 with the ECS E3 ubiquitin ligase complex components ELOC and CUL5. In Mus musculus (Mouse), this protein is SPRY domain-containing SOCS box protein 1 (Spsb1).